The following is a 389-amino-acid chain: Glutaryl-CoA dehydrogenase (389 aa).

2 residues coordinate substrate: Arg87 and Asn91. Residues 126-129 (FGIT), Ser135, and 159-161 (WIS) contribute to the FAD site. Residue Ser135 coordinates substrate. Ser181 contacts substrate. Residues Arg271, 281-284 (FQMN), Arg340, Ala344, and 367-371 (EGSAN) each bind FAD. Catalysis depends on Glu367, which acts as the Proton acceptor. Arg385 contributes to the substrate binding site.

It belongs to the acyl-CoA dehydrogenase family. In terms of assembly, homotetramer. The cofactor is FAD.

The catalysed reaction is glutaryl-CoA + A = (2E)-glutaconyl-CoA + AH2. It participates in aromatic compound metabolism; benzoyl-CoA degradation. Inhibited by glutaconyl-CoA. Its function is as follows. Catalyzes the dehydrogenation of Glutaryl-CoA to glutaconyl-CoA. The sequence is that of Glutaryl-CoA dehydrogenase (Acd) from Desulfococcus multivorans.